Here is a 954-residue protein sequence, read N- to C-terminus: Glycine dehydrogenase (decarboxylating) (954 aa).

Lys-702 is subject to N6-(pyridoxal phosphate)lysine.

It belongs to the GcvP family. The glycine cleavage system is composed of four proteins: P, T, L and H. Requires pyridoxal 5'-phosphate as cofactor.

The catalysed reaction is N(6)-[(R)-lipoyl]-L-lysyl-[glycine-cleavage complex H protein] + glycine + H(+) = N(6)-[(R)-S(8)-aminomethyldihydrolipoyl]-L-lysyl-[glycine-cleavage complex H protein] + CO2. In terms of biological role, the glycine cleavage system catalyzes the degradation of glycine. The P protein binds the alpha-amino group of glycine through its pyridoxal phosphate cofactor; CO(2) is released and the remaining methylamine moiety is then transferred to the lipoamide cofactor of the H protein. The polypeptide is Glycine dehydrogenase (decarboxylating) (Xanthomonas euvesicatoria pv. vesicatoria (strain 85-10) (Xanthomonas campestris pv. vesicatoria)).